Consider the following 441-residue polypeptide: BTB/POZ domain-containing protein At2g24240 (441 aa).

The BTB domain occupies 6–76; sequence DRIKFNVGGR…LRTGDLNVPA (71 aa).

Its pathway is protein modification; protein ubiquitination. Functionally, may act as a substrate-specific adapter of an E3 ubiquitin-protein ligase complex (CUL3-RBX1-BTB) which mediates the ubiquitination and subsequent proteasomal degradation of target proteins. This Arabidopsis thaliana (Mouse-ear cress) protein is BTB/POZ domain-containing protein At2g24240.